Reading from the N-terminus, the 142-residue chain is Succinate dehydrogenase assembly factor 2, mitochondrial (142 aa).

Belongs to the SDHAF2 family. Interacts with the flavoprotein subunit within the SDH catalytic dimer.

It localises to the mitochondrion matrix. Functionally, plays an essential role in the assembly of succinate dehydrogenase (SDH), an enzyme complex (also referred to as respiratory complex II) that is a component of both the tricarboxylic acid (TCA) cycle and the mitochondrial electron transport chain, and which couples the oxidation of succinate to fumarate with the reduction of ubiquinone (coenzyme Q) to ubiquinol. Required for flavinylation (covalent attachment of FAD) of the flavoprotein subunit of the SDH catalytic dimer. This Debaryomyces hansenii (strain ATCC 36239 / CBS 767 / BCRC 21394 / JCM 1990 / NBRC 0083 / IGC 2968) (Yeast) protein is Succinate dehydrogenase assembly factor 2, mitochondrial.